Consider the following 428-residue polypeptide: Divergent protein kinase domain 1A (428 aa).

At 1-27 (MARSLCPGAWLRKPYYLQARFSYVRMK) the chain is on the cytoplasmic side. The chain crosses the membrane as a helical span at residues 28–48 (YLFFSWLVVFVGSWIIYVQYS). The Lumenal portion of the chain corresponds to 49–428 (TYTELCRGKD…WKKISYTNDS (380 aa)).

The protein belongs to the DIPK family. Post-translationally, among the many cysteines in the lumenal domain, most are probably involved in disulfide bonds.

Its subcellular location is the endoplasmic reticulum membrane. The protein is Divergent protein kinase domain 1A of Homo sapiens (Human).